We begin with the raw amino-acid sequence, 156 residues long: Small ribosomal subunit protein uS7 (156 aa).

It belongs to the universal ribosomal protein uS7 family. Part of the 30S ribosomal subunit. Contacts proteins S9 and S11.

Functionally, one of the primary rRNA binding proteins, it binds directly to 16S rRNA where it nucleates assembly of the head domain of the 30S subunit. Is located at the subunit interface close to the decoding center, probably blocks exit of the E-site tRNA. This is Small ribosomal subunit protein uS7 from Shewanella sediminis (strain HAW-EB3).